A 364-amino-acid chain; its full sequence is Fructose-bisphosphate aldolase B (364 aa).

N-acetylalanine is present on Ala-2. Lys-13 bears the N6-succinyllysine mark. At Ser-36 the chain carries Phosphoserine. Thr-39 carries the phosphothreonine modification. Arg-43 serves as a coordination point for beta-D-fructose 1,6-bisphosphate. Thr-119 carries the post-translational modification Phosphothreonine. Position 121 is an N6-succinyllysine (Lys-121). Ser-132 bears the Phosphoserine mark. Glu-188 acts as the Proton acceptor in catalysis. The active-site Schiff-base intermediate with dihydroxyacetone-P is the Lys-230. Residues Ser-272, Ser-276, Ser-299, and Ser-301 each carry the phosphoserine modification. 272–274 (SGG) contacts beta-D-fructose 1,6-bisphosphate. A beta-D-fructose 1,6-bisphosphate-binding site is contributed by Arg-304. Ser-309 is modified (phosphoserine). The residue at position 317 (Lys-317) is an N6-succinyllysine.

Belongs to the class I fructose-bisphosphate aldolase family. As to quaternary structure, homotetramer. Interacts with BBS1, BBS2, BBS4 and BBS7. Forms a ternary complex with G6PD and TP53; this interaction is direct.

The protein resides in the cytoplasm. It is found in the cytosol. It localises to the cytoskeleton. The protein localises to the microtubule organizing center. Its subcellular location is the centrosome. The protein resides in the centriolar satellite. The enzyme catalyses beta-D-fructose 1,6-bisphosphate = D-glyceraldehyde 3-phosphate + dihydroxyacetone phosphate. The catalysed reaction is beta-D-fructose 1-phosphate = D-glyceraldehyde + dihydroxyacetone phosphate. The protein operates within carbohydrate degradation; glycolysis; D-glyceraldehyde 3-phosphate and glycerone phosphate from D-glucose: step 4/4. It functions in the pathway carbohydrate biosynthesis; gluconeogenesis. It participates in carbohydrate metabolism; fructose metabolism. Functionally, catalyzes the aldol cleavage of fructose 1,6-biphosphate to form two triosephosphates dihydroxyacetone phosphate and D-glyceraldehyde 3-phosphate in glycolysis as well as the reverse stereospecific aldol addition reaction in gluconeogenesis. In fructolysis, metabolizes fructose 1-phosphate derived from the phosphorylation of dietary fructose by fructokinase into dihydroxyacetone phosphate and D-glyceraldehyde. Acts as an adapter independently of its enzymatic activity, exerts a tumor suppressor role by stabilizing the ternary complex with G6PD and TP53 to inhibit G6PD activity and keep oxidative pentose phosphate metabolism in check. The sequence is that of Fructose-bisphosphate aldolase B (ALDOB) from Bos taurus (Bovine).